Here is a 246-residue protein sequence, read N- to C-terminus: ATP synthase subunit a, chloroplastic (246 aa).

The next 5 membrane-spanning stretches (helical) occupy residues 35–55 (GQVLLTSWFVLGTVILFGLIA), 94–114 (VPFIGTIFIFVLVSNWSGALL), 132–152 (DINTTVALALLTSISYFYAGI), 198–218 (LVVGVLVALVPLIVPIPVMLL), and 219–239 (GVFTSAIQALVFATLAGAYIG).

This sequence belongs to the ATPase A chain family. In terms of assembly, F-type ATPases have 2 components, CF(1) - the catalytic core - and CF(0) - the membrane proton channel. CF(1) has five subunits: alpha(3), beta(3), gamma(1), delta(1), epsilon(1). CF(0) has four main subunits: a, b, b' and c.

It localises to the plastid. Its subcellular location is the chloroplast thylakoid membrane. Key component of the proton channel; it plays a direct role in the translocation of protons across the membrane. This Stigeoclonium helveticum (Green alga) protein is ATP synthase subunit a, chloroplastic.